The chain runs to 103 residues: NADH-quinone oxidoreductase subunit K (103 aa).

A run of 3 helical transmembrane segments spans residues 5-25, 30-50, and 66-86; these read ISSY…GALT, VVVL…LVAF, and LFTM…LIAL.

The protein belongs to the complex I subunit 4L family. NDH-1 is composed of 14 different subunits. Subunits NuoA, H, J, K, L, M, N constitute the membrane sector of the complex.

Its subcellular location is the cell membrane. It catalyses the reaction a quinone + NADH + 5 H(+)(in) = a quinol + NAD(+) + 4 H(+)(out). NDH-1 shuttles electrons from NADH, via FMN and iron-sulfur (Fe-S) centers, to quinones in the respiratory chain. The immediate electron acceptor for the enzyme in this species is believed to be a menaquinone. Couples the redox reaction to proton translocation (for every two electrons transferred, four hydrogen ions are translocated across the cytoplasmic membrane), and thus conserves the redox energy in a proton gradient. In Brevibacillus brevis (strain 47 / JCM 6285 / NBRC 100599), this protein is NADH-quinone oxidoreductase subunit K.